Reading from the N-terminus, the 154-residue chain is C-type lectin 16 (154 aa).

A signal peptide spans 1 to 20 (MALSLYLIAVICSLVGFTAS). Residues 27 to 152 (DNRFCFPNVV…CASMRRFVCE (126 aa)) form the C-type lectin domain. Cystine bridges form between Cys-46–Cys-151 and Cys-123–Cys-143.

In terms of assembly, (Microbial infection) Interacts with non-structural protein 1 of dengue virus type 2. Interacts with envelope protein E of dengue virus type 2. As to expression, female salivary gland (at protein level). Not detected in female carcass without salivary glands (at protein level). Not detected in male tissues (at protein level).

It is found in the secreted. Functionally, putative lectin. May have a regulatory role in mosquito immunity. Probably suppresses replication of dengue virus type 2 in mosquito salivary glands. This chain is C-type lectin 16, found in Aedes aegypti (Yellowfever mosquito).